The sequence spans 384 residues: Anhydro-N-acetylmuramic acid kinase (384 aa).

17 to 24 contributes to the ATP binding site; it reads GTSMDGVD.

This sequence belongs to the anhydro-N-acetylmuramic acid kinase family.

The catalysed reaction is 1,6-anhydro-N-acetyl-beta-muramate + ATP + H2O = N-acetyl-D-muramate 6-phosphate + ADP + H(+). Its pathway is amino-sugar metabolism; 1,6-anhydro-N-acetylmuramate degradation. It functions in the pathway cell wall biogenesis; peptidoglycan recycling. Catalyzes the specific phosphorylation of 1,6-anhydro-N-acetylmuramic acid (anhMurNAc) with the simultaneous cleavage of the 1,6-anhydro ring, generating MurNAc-6-P. Is required for the utilization of anhMurNAc either imported from the medium or derived from its own cell wall murein, and thus plays a role in cell wall recycling. This chain is Anhydro-N-acetylmuramic acid kinase, found in Burkholderia thailandensis (strain ATCC 700388 / DSM 13276 / CCUG 48851 / CIP 106301 / E264).